The primary structure comprises 513 residues: Flavonoid 3'-monooxygenase (513 aa).

The chain crosses the membrane as a helical span at residues 1–21; it reads MATLFLTILLATVLFLILRIF. Topologically, residues 22-513 are cytoplasmic; it reads SHRRNRSHNN…APNVYGLGSG (492 aa). Cys445 contacts heme.

It belongs to the cytochrome P450 family. Heme is required as a cofactor. As to expression, high expression in siliques and to a lower extent in stems, flowers and senescing leaves.

It is found in the endoplasmic reticulum membrane. The catalysed reaction is a 3'-unsubstituted flavone + reduced [NADPH--hemoprotein reductase] + O2 = a 3'-hydroxyflavone + oxidized [NADPH--hemoprotein reductase] + H2O + H(+). It functions in the pathway secondary metabolite biosynthesis; flavonoid biosynthesis. In terms of biological role, catalyzes the 3'-hydroxylation of the flavonoid B-ring to the 3',4'-hydroxylated state. Convert naringenin to eriodictyol and dihydrokaempferol to dihydroquercetin. This chain is Flavonoid 3'-monooxygenase (CYP75B1), found in Arabidopsis thaliana (Mouse-ear cress).